The following is a 348-amino-acid chain: High mobility group protein 20A (348 aa).

2 disordered regions span residues 1–114 and 181–213; these read MENL…YVRF and SRKAQDRQKGKLHRQDGARQPVHDHEKEADTKE. Composition is skewed to polar residues over residues 34–47 and 56–71; these read SESSFTGGTSQPVN and SQVQQLQNESTNTAEN. Basic and acidic residues predominate over residues 72–82; the sequence is TEQKPEEEQQR. Residues 83 to 97 show a composition bias toward basic residues; sequence TKRGGWAKGRKRKKP. Residues 104 to 172 constitute a DNA-binding region (HMG box); the sequence is PKSPLTGYVR…RYMRELEQYQ (69 aa). Over residues 183–213 the composition is skewed to basic and acidic residues; the sequence is KAQDRQKGKLHRQDGARQPVHDHEKEADTKE. Positions 230-274 form a coiled coil; sequence SKAREAELRQLRKSNMEFEERNAALQKHVESMRTAVEKLEVDVIQ.

It localises to the nucleus. In terms of biological role, plays a role in neuronal differentiation. The sequence is that of High mobility group protein 20A (HMG20A) from Gallus gallus (Chicken).